Reading from the N-terminus, the 651-residue chain is Lateral signaling target protein 2 (651 aa).

Residues 294–425 (VPEDSSSKLT…KENEEDVDEQ (132 aa)) form a disordered region. Residues 300–310 (SKLTMSDFRTN) show a composition bias toward polar residues. Positions 345–363 (SEATSLASSGLTSPSSGSE) are enriched in low complexity. Over residues 373 to 394 (SDEELDDDVIETASSEENESDS) the composition is skewed to acidic residues. The span at 395-412 (NNENVEMVASSGDSSETE) shows a compositional bias: low complexity. The FYVE-type zinc finger occupies 557 to 617 (DEDCEQCTAC…VCNLCYVHRL (61 aa)). Zn(2+)-binding residues include Cys563, Cys566, Cys579, Cys582, Cys587, Cys590, Cys609, and Cys612.

The protein belongs to the lst-2 family.

Functionally, negative regulator of epidermal growth factor receptor (EGFR) signaling. The chain is Lateral signaling target protein 2 (lst-2) from Caenorhabditis briggsae.